We begin with the raw amino-acid sequence, 236 residues long: Small ribosomal subunit protein bS21m (236 aa).

The segment at 65–136 (KPAAGAAAGG…SSKPSPMQTW (72 aa)) is disordered. Low complexity predominate over residues 107–131 (SNSSTSSSSSSSSSGGALYSSSKPS).

Belongs to the bacterial ribosomal protein bS21 family. Component of the mitochondrial small ribosomal subunit (mt-SSU). Mature N.crassa 74S mitochondrial ribosomes consist of a small (37S) and a large (54S) subunit. The 37S small subunit contains a 16S ribosomal RNA (16S mt-rRNA) and 32 different proteins. The 54S large subunit contains a 23S rRNA (23S mt-rRNA) and 42 different proteins.

Its subcellular location is the mitochondrion. Functionally, component of the mitochondrial ribosome (mitoribosome), a dedicated translation machinery responsible for the synthesis of mitochondrial genome-encoded proteins, including at least some of the essential transmembrane subunits of the mitochondrial respiratory chain. The mitoribosomes are attached to the mitochondrial inner membrane and translation products are cotranslationally integrated into the membrane. The polypeptide is Small ribosomal subunit protein bS21m (mrp21) (Neurospora crassa (strain ATCC 24698 / 74-OR23-1A / CBS 708.71 / DSM 1257 / FGSC 987)).